Reading from the N-terminus, the 280-residue chain is 4-diphosphocytidyl-2-C-methyl-D-erythritol kinase (280 aa).

Residue K8 is part of the active site. ATP is bound at residue 91–101 (PVAAGLAGGSA). D133 is a catalytic residue.

This sequence belongs to the GHMP kinase family. IspE subfamily.

It carries out the reaction 4-CDP-2-C-methyl-D-erythritol + ATP = 4-CDP-2-C-methyl-D-erythritol 2-phosphate + ADP + H(+). Its pathway is isoprenoid biosynthesis; isopentenyl diphosphate biosynthesis via DXP pathway; isopentenyl diphosphate from 1-deoxy-D-xylulose 5-phosphate: step 3/6. Catalyzes the phosphorylation of the position 2 hydroxy group of 4-diphosphocytidyl-2C-methyl-D-erythritol. This is 4-diphosphocytidyl-2-C-methyl-D-erythritol kinase from Clostridium acetobutylicum (strain ATCC 824 / DSM 792 / JCM 1419 / IAM 19013 / LMG 5710 / NBRC 13948 / NRRL B-527 / VKM B-1787 / 2291 / W).